A 367-amino-acid chain; its full sequence is NADH-quinone oxidoreductase subunit D (367 aa).

This sequence belongs to the complex I 49 kDa subunit family. In terms of assembly, NDH-1 is composed of 14 different subunits. Subunits NuoB, C, D, E, F, and G constitute the peripheral sector of the complex.

The protein resides in the cell membrane. It catalyses the reaction a quinone + NADH + 5 H(+)(in) = a quinol + NAD(+) + 4 H(+)(out). NDH-1 shuttles electrons from NADH, via FMN and iron-sulfur (Fe-S) centers, to quinones in the respiratory chain. The immediate electron acceptor for the enzyme in this species is believed to be ubiquinone. Couples the redox reaction to proton translocation (for every two electrons transferred, four hydrogen ions are translocated across the cytoplasmic membrane), and thus conserves the redox energy in a proton gradient. The chain is NADH-quinone oxidoreductase subunit D from Dehalococcoides mccartyi (strain CBDB1).